A 78-amino-acid chain; its full sequence is RNA-binding protein Hfq (78 aa).

Residues Asp-10–Val-69 enclose the Sm domain.

It belongs to the Hfq family. In terms of assembly, homohexamer.

Its function is as follows. RNA chaperone that binds small regulatory RNA (sRNAs) and mRNAs to facilitate mRNA translational regulation in response to envelope stress, environmental stress and changes in metabolite concentrations. Also binds with high specificity to tRNAs. This chain is RNA-binding protein Hfq, found in Bordetella bronchiseptica (strain ATCC BAA-588 / NCTC 13252 / RB50) (Alcaligenes bronchisepticus).